Consider the following 344-residue polypeptide: Anthranilate phosphoribosyltransferase (344 aa).

Residues Gly-86, 89–90, Thr-94, 96–99, 114–122, and Ser-126 contribute to the 5-phospho-alpha-D-ribose 1-diphosphate site; these read GD, NIST, and KHGNKSASG. Gly-86 contacts anthranilate. Ser-98 lines the Mg(2+) pocket. Position 117 (Asn-117) interacts with anthranilate. Arg-172 contacts anthranilate. Residues Asp-231 and Glu-232 each coordinate Mg(2+).

This sequence belongs to the anthranilate phosphoribosyltransferase family. As to quaternary structure, homodimer. The cofactor is Mg(2+).

The catalysed reaction is N-(5-phospho-beta-D-ribosyl)anthranilate + diphosphate = 5-phospho-alpha-D-ribose 1-diphosphate + anthranilate. It functions in the pathway amino-acid biosynthesis; L-tryptophan biosynthesis; L-tryptophan from chorismate: step 2/5. Its function is as follows. Catalyzes the transfer of the phosphoribosyl group of 5-phosphorylribose-1-pyrophosphate (PRPP) to anthranilate to yield N-(5'-phosphoribosyl)-anthranilate (PRA). In Prochlorococcus marinus (strain AS9601), this protein is Anthranilate phosphoribosyltransferase.